A 126-amino-acid polypeptide reads, in one-letter code: Aspartate 1-decarboxylase (126 aa).

The active-site Schiff-base intermediate with substrate; via pyruvic acid is S25. Residue S25 is modified to Pyruvic acid (Ser). T57 is a binding site for substrate. Y58 acts as the Proton donor in catalysis. 73–75 provides a ligand contact to substrate; the sequence is GAA.

Belongs to the PanD family. In terms of assembly, heterooctamer of four alpha and four beta subunits. Pyruvate serves as cofactor. In terms of processing, is synthesized initially as an inactive proenzyme, which is activated by self-cleavage at a specific serine bond to produce a beta-subunit with a hydroxyl group at its C-terminus and an alpha-subunit with a pyruvoyl group at its N-terminus.

The protein localises to the cytoplasm. The catalysed reaction is L-aspartate + H(+) = beta-alanine + CO2. The protein operates within cofactor biosynthesis; (R)-pantothenate biosynthesis; beta-alanine from L-aspartate: step 1/1. Functionally, catalyzes the pyruvoyl-dependent decarboxylation of aspartate to produce beta-alanine. The polypeptide is Aspartate 1-decarboxylase (Cellvibrio japonicus (strain Ueda107) (Pseudomonas fluorescens subsp. cellulosa)).